The primary structure comprises 167 residues: Transcriptional regulator MraZ (167 aa).

2 consecutive SpoVT-AbrB domains span residues 8–51 and 92–135; these read ESNH…YGDH and SFPT…NPAT.

The protein belongs to the MraZ family. As to quaternary structure, forms oligomers.

The protein resides in the cytoplasm. Its subcellular location is the nucleoid. This is Transcriptional regulator MraZ from Ruegeria pomeroyi (strain ATCC 700808 / DSM 15171 / DSS-3) (Silicibacter pomeroyi).